The chain runs to 211 residues: ATP phosphoribosyltransferase (211 aa).

This sequence belongs to the ATP phosphoribosyltransferase family. Short subfamily. Heteromultimer composed of HisG and HisZ subunits.

It is found in the cytoplasm. The catalysed reaction is 1-(5-phospho-beta-D-ribosyl)-ATP + diphosphate = 5-phospho-alpha-D-ribose 1-diphosphate + ATP. It participates in amino-acid biosynthesis; L-histidine biosynthesis; L-histidine from 5-phospho-alpha-D-ribose 1-diphosphate: step 1/9. Functionally, catalyzes the condensation of ATP and 5-phosphoribose 1-diphosphate to form N'-(5'-phosphoribosyl)-ATP (PR-ATP). Has a crucial role in the pathway because the rate of histidine biosynthesis seems to be controlled primarily by regulation of HisG enzymatic activity. The sequence is that of ATP phosphoribosyltransferase from Rippkaea orientalis (strain PCC 8801 / RF-1) (Cyanothece sp. (strain PCC 8801)).